Reading from the N-terminus, the 526-residue chain is Seipin-2 (526 aa).

The disordered stretch occupies residues 33–77; sequence PIRSNSHQPSSLLRRRKSAHRRDLISSDIETEPSSSSDGFDVGEK. The span at 58–70 shows a compositional bias: low complexity; the sequence is SSDIETEPSSSSD. 4 helical membrane passes run 195–215, 224–243, 258–278, and 483–503; these read SLLTFPPWLLRNCFLFFFDPF, FLMARVAGISDMIFGYMNPF, FGWGMFWAVYVGIVLFGLLVS, and LFVWISMSLFITELLFTLVCC.

This sequence belongs to the seipin family. In terms of tissue distribution, expressed in seeds, seedlings, leaves, stems and roots. Not detected in flowers.

Its subcellular location is the endoplasmic reticulum membrane. Functionally, involved in lipid metabolism and lipid droplet (LD) morphology, number, and size. Supports the formation of small-sized LDs and modulates triacylglycerol accumulation. Induces probably a reorganization of the endoplasmic reticulum into LD-forming domains. The chain is Seipin-2 from Arabidopsis thaliana (Mouse-ear cress).